The chain runs to 127 residues: Cyclin-dependent protein kinase inhibitor SIM (127 aa).

The interval 21 to 71 is disordered; the sequence is RANTNRDDDGGGCTTPTSSDHKIPPTTATTPPPPPQKPRPPSTPSSLGIRS. Over residues 50–63 the composition is skewed to pro residues; that stretch reads TPPPPPQKPRPPST.

In terms of assembly, interacts with CDKA-1. Interacts with CYCD2-1, CYCD3-2 and CYCD4-1. Interacts with CDKB1-1. Interacts with CPR5. As to expression, expressed in the shoot apical meristem, leaf primordia and the elongation zone of the root.

It is found in the nucleus. In terms of biological role, cyclin-dependent protein kinase (CDK) inhibitor that functions as a repressor of mitosis in the endoreduplication cell cycle. Inhibits the kinase activity of CYCD3-1/CDKA-1, CYCD2-1/CDKA-1 and CYCB1-1/CDKB1-1 complexes in a dose dependent manner. Cooperates with SMR1 and SMR2 to promote endoreplication during leaf development. Required for normal trichome endoreplicating cell cycles. Positive regulator of effector-triggered immunity (ETI). The sequence is that of Cyclin-dependent protein kinase inhibitor SIM from Arabidopsis thaliana (Mouse-ear cress).